The following is a 318-amino-acid chain: Taste receptor type 2 member 60 (318 aa).

Residues 1 to 7 (MNGDHMV) are Extracellular-facing. A helical transmembrane segment spans residues 8–28 (LGSSVTDQKAIILVIILLLLC). Over 29–40 (LVAIAGNGFITA) the chain is Cytoplasmic. A helical transmembrane segment spans residues 41–61 (ALGVEWVLRGTLLPCDKLLVS). Residues 62-88 (LRASRFCLQWVVMGKTIYVLLYPTAFP) are Extracellular-facing. Residues 89–109 (YNPVLQFLAFQWDFLNAATLW) form a helical membrane-spanning segment. Over 110 to 128 (FSSWLSVFYCVKIATFTHP) the chain is Cytoplasmic. A helical membrane pass occupies residues 129-149 (VFLWLKHKLSEWVPWMFFSSV). Over 150-183 (GLSSFTTILFFIGNHSIYQNYLRNHLQPWNVTGN) the chain is Extracellular. N-linked (GlcNAc...) asparagine glycans are attached at residues Asn163 and Asn179. Residues 184 to 204 (SIWSYCEKFYLFPVKMITWTM) traverse the membrane as a helical segment. The Cytoplasmic portion of the chain corresponds to 205-234 (PTAVFFICMILLITSLGRHMEKALLTTSGF). The chain crosses the membrane as a helical span at residues 235 to 255 (REPSVQAHVKALLALLSLAML). Topologically, residues 256 to 264 (FISYFLSLV) are extracellular. A helical membrane pass occupies residues 265-285 (LSAAGIFPPLDFKFWVGESVI). The Cytoplasmic portion of the chain corresponds to 286–318 (YLCAGVHPIILLFSNRRLRAVLERCRSSRCRTP).

Belongs to the G-protein coupled receptor T2R family.

It is found in the membrane. Receptor that may play a role in the perception of bitterness and is gustducin-linked. May play a role in sensing the chemical composition of the gastrointestinal content. The activity of this receptor may stimulate alpha gustducin, mediate PLC-beta-2 activation and lead to the gating of TRPM5. The chain is Taste receptor type 2 member 60 (TAS2R60) from Macaca mulatta (Rhesus macaque).